We begin with the raw amino-acid sequence, 441 residues long: Peroxisomal biogenesis factor 3 (441 aa).

Over 1-17 (MAPNQRSRSLLQRHRGK) the chain is Peroxisomal. A helical transmembrane segment spans residues 18–39 (VLISLTGIAALFTTGSVVVFFV). The Cytoplasmic segment spans residues 40–441 (KRWLYKQQLR…GVSSSFSFKP (402 aa)).

Belongs to the peroxin-3 family. In terms of assembly, interacts with MSP1; leading to inhibit the translocase activity of MSP1.

It localises to the peroxisome membrane. In terms of biological role, involved in peroxisome biosynthesis. Acts as a regulator of MSP1 by inhibiting the ability of MSP1 to unfold target proteins. This is Peroxisomal biogenesis factor 3 (PEX3) from Saccharomyces cerevisiae (strain ATCC 204508 / S288c) (Baker's yeast).